A 507-amino-acid chain; its full sequence is Alkyl hydroperoxide reductase subunit F (507 aa).

207–222 (DVLIVGGGPASGSAAI) contributes to the FAD binding site. An intrachain disulfide couples Cys335 to Cys338. 347–361 (DVAVIGGGNSGVEAA) serves as a coordination point for NAD(+). 467 to 477 (TNVPGIFAAGD) lines the FAD pocket.

Belongs to the class-II pyridine nucleotide-disulfide oxidoreductase family. As to quaternary structure, homodimer. It depends on FAD as a cofactor.

Serves to protect the cell against DNA damage by alkyl hydroperoxides. It can use either NADH or NADPH as electron donor for direct reduction of redox dyes or of alkyl hydroperoxides when combined with the AhpC protein. This Staphylococcus aureus (strain MRSA252) protein is Alkyl hydroperoxide reductase subunit F (ahpF).